The chain runs to 641 residues: Peroxisomal targeting signal 1 receptor (641 aa).

Cysteine 12 participates in a covalent cross-link: Glycyl cysteine thioester (Cys-Gly) (interchain with G-Cter in ubiquitin). The interval 12-34 (CSEPNALGNFVQHFTNERSYHDK) is amphipathic helix 1 (AH1). Positions 74 to 92 (HLMMDRHLNLRDGPREHKE) are amphipathic helix 2 (AH2). Residues 261–288 (VEAAWDETARRTISDITRPITQINDPKL) form an amphipathic helix 4 (AH4) region. The short motif at 331-335 (WTEDY) is the WxxxF/Y motif element. TPR repeat units follow at residues 359-392 (DSDT…NPEN), 393-426 (AMAW…DPTN), 427-460 (SKAR…TPEY), 503-536 (PEVQ…SPTD), 538-570 (QLWN…KPSY), and 571-604 (VRAR…HPAP).

The protein belongs to the peroxisomal targeting signal receptor family. As to quaternary structure, interacts (via WxxxF/Y and LVxEF motifs) with PEX14; promoting translocation through the PEX13-PEX14 docking complex. Interacts with PEX7, promoting peroxisomal import of proteins containing a C-terminal PTS2-type peroxisomal targeting signal. Post-translationally, monoubiquitinated at Cys-12 by PEX2 during PEX5 passage through the retrotranslocation channel. Cys-12 monoubiquitination acts as a recognition signal for the PEX1-PEX6 complex and is required for PEX5 extraction and export from peroxisomes. When PEX5 recycling is compromised, polyubiquitinated by PEX10 during its passage through the retrotranslocation channel, leading to its degradation.

Its subcellular location is the cytoplasm. It localises to the cytosol. The protein resides in the peroxisome matrix. Its function is as follows. Receptor that mediates peroxisomal import of proteins containing a C-terminal PTS1-type tripeptide peroxisomal targeting signal (SKL-type). Binds to cargo proteins containing a PTS1 peroxisomal targeting signal in the cytosol, and translocates them into the peroxisome matrix by passing through the PEX13-PEX14 docking complex along with cargo proteins. PEX5 receptor is then retrotranslocated into the cytosol, leading to release of bound cargo in the peroxisome matrix, and reset for a subsequent peroxisome import cycle. In terms of biological role, in addition to promoting peroxisomal translocation of proteins containing a PTS1 peroxisomal targeting signal, mediates peroxisomal import of proteins containing a C-terminal PTS2-type peroxisomal targeting signal via its interaction with PEX7. Interaction with PEX7 only takes place when PEX7 is associated with cargo proteins containing a PTS2 peroxisomal targeting signal. PEX7 along with PTS2-containing cargo proteins are then translocated through the PEX13-PEX14 docking complex together with PEX5. The sequence is that of Peroxisomal targeting signal 1 receptor (pex5) from Dictyostelium discoideum (Social amoeba).